We begin with the raw amino-acid sequence, 324 residues long: Muscleblind-like protein (324 aa).

2 consecutive C3H1-type zinc fingers follow at residues 38 to 66 (WLQV…HPPP) and 72 to 100 (QGRV…HPPQ).

The protein belongs to the muscleblind family. As to expression, expressed in neurons around the pharynx.

The protein localises to the nucleus. Its function is as follows. Binds to RNA with repeat sequences 5'-CUG-3' and 5'-CCUG-3'. The sequence is that of Muscleblind-like protein (mbl-1) from Caenorhabditis elegans.